The primary structure comprises 405 residues: MCSIGEDDFGDEGAAHAMVVESLPLGIVLSPGNCSKCDVNSGELYKLNFRTAECRECFLAYARHKFRAALGAAKILPRNAEVLLVLDGSAESLVLLDMLHFAQTQNTFKRLHCNARVVYVEEQQVQGRDPVDLEALQRLSTQYAPFDFYVIELGALPSSLQRIKDYSPFLNANNELIHKLQKLRSLTARQDYLQQQRKNLICSVAQCLQCTHVFESNISVDLATQLLTAIALGRGGSAALDVALLDDRLSGDVKLLRPLKDLTEQEIQFYIHAQRLKPHFQKGSRYGMEHGETASLQNLTSAFVANLQQNFASTVSTVFRTGDKIAVNSNPEQSSCVHCRSTLDSELSDTLLAIEYSRSVSEAGVSLYKSGQDLEGLAKKRLENKDGLCHACRAIQTELDSGNLL.

Belongs to the CTU2/NCS2 family.

The protein localises to the cytoplasm. Its pathway is tRNA modification; 5-methoxycarbonylmethyl-2-thiouridine-tRNA biosynthesis. Plays a central role in 2-thiolation of mcm(5)S(2)U at tRNA wobble positions of tRNA(Lys), tRNA(Glu) and tRNA(Gln). May act by forming a heterodimer with NCS6/CTU1 that ligates sulfur from thiocarboxylated URM1 onto the uridine of tRNAs at wobble position. The polypeptide is Cytoplasmic tRNA 2-thiolation protein 2 (Drosophila melanogaster (Fruit fly)).